A 120-amino-acid chain; its full sequence is Large ribosomal subunit protein bL20c (120 aa).

It belongs to the bacterial ribosomal protein bL20 family.

It localises to the plastid. Its function is as follows. Binds directly to 23S ribosomal RNA and is necessary for the in vitro assembly process of the 50S ribosomal subunit. It is not involved in the protein synthesizing functions of that subunit. The polypeptide is Large ribosomal subunit protein bL20c (Cuscuta obtusiflora (Peruvian dodder)).